The primary structure comprises 203 residues: Outer-membrane lipoprotein carrier protein (203 aa).

An N-terminal signal peptide occupies residues 1 to 21; sequence MKKMAIACALLSSVVASSVWA. Residues 178–203 are disordered; that stretch reads QQNGAVDPSKFTFTPPQGVTIDDQRK.

Belongs to the LolA family. As to quaternary structure, monomer.

It localises to the periplasm. Participates in the translocation of lipoproteins from the inner membrane to the outer membrane. Only forms a complex with a lipoprotein if the residue after the N-terminal Cys is not an aspartate (The Asp acts as a targeting signal to indicate that the lipoprotein should stay in the inner membrane). This Salmonella agona (strain SL483) protein is Outer-membrane lipoprotein carrier protein.